We begin with the raw amino-acid sequence, 833 residues long: Copper-exporting P-type ATPase (833 aa).

2 consecutive HMA domains span residues 3-64 (QTID…YGAT) and 98-161 (ESQQ…YGAE). 4 residues coordinate Cu(+): C14, C17, C109, and C112. 6 helical membrane passes run 186-206 (WQAI…MIGD), 217-237 (LWLA…GHFY), 253-273 (TLVA…NLWP), 283-303 (LYYE…MLEA), 437-457 (AVFV…WYFF), and 463-483 (IVYT…CALG). Catalysis depends on D522, which acts as the 4-aspartylphosphate intermediate. Residues D719 and D723 each coordinate Mg(2+). 2 consecutive transmembrane segments (helical) span residues 778-798 (LGAF…LWPF) and 800-820 (GTLL…ITVV).

The protein belongs to the cation transport ATPase (P-type) (TC 3.A.3) family. Type IB subfamily.

It localises to the cell inner membrane. Its subcellular location is the cytoplasm. It carries out the reaction Cu(+)(in) + ATP + H2O = Cu(+)(out) + ADP + phosphate + H(+). Involved in Cu(+) export. Essential for copper tolerance under both aerobic and anaerobic conditions. In terms of biological role, probably also encodes a cytoplasmic copper chaperone CopA(Z) that is produced by programmed ribosomal frameshifting. The polypeptide is Copper-exporting P-type ATPase (copA) (Salmonella typhimurium (strain LT2 / SGSC1412 / ATCC 700720)).